The sequence spans 351 residues: Nicotinate-nucleotide--dimethylbenzimidazole phosphoribosyltransferase (351 aa).

The active-site Proton acceptor is E317.

It belongs to the CobT family.

It catalyses the reaction 5,6-dimethylbenzimidazole + nicotinate beta-D-ribonucleotide = alpha-ribazole 5'-phosphate + nicotinate + H(+). It functions in the pathway nucleoside biosynthesis; alpha-ribazole biosynthesis; alpha-ribazole from 5,6-dimethylbenzimidazole: step 1/2. Functionally, catalyzes the synthesis of alpha-ribazole-5'-phosphate from nicotinate mononucleotide (NAMN) and 5,6-dimethylbenzimidazole (DMB). The chain is Nicotinate-nucleotide--dimethylbenzimidazole phosphoribosyltransferase from Pseudomonas aeruginosa (strain LESB58).